The following is a 412-amino-acid chain: Argininosuccinate synthase (412 aa).

Residues 16-24 (AYSGGLDTS) and Ala-44 contribute to the ATP site. Tyr-96 and Ser-101 together coordinate L-citrulline. Gly-126 contributes to the ATP binding site. L-aspartate-binding residues include Thr-128, Asn-132, and Asp-133. Position 132 (Asn-132) interacts with L-citrulline. Residues Arg-136, Ser-185, Ser-194, Glu-270, and Tyr-282 each coordinate L-citrulline.

The protein belongs to the argininosuccinate synthase family. Type 1 subfamily. In terms of assembly, homotetramer.

The protein localises to the cytoplasm. The enzyme catalyses L-citrulline + L-aspartate + ATP = 2-(N(omega)-L-arginino)succinate + AMP + diphosphate + H(+). It functions in the pathway amino-acid biosynthesis; L-arginine biosynthesis; L-arginine from L-ornithine and carbamoyl phosphate: step 2/3. The chain is Argininosuccinate synthase from Shewanella baltica (strain OS195).